The sequence spans 443 residues: Xaa-Pro dipeptidase (443 aa).

5 residues coordinate Mn(2+): Asp-246, Asp-257, His-339, Glu-384, and Glu-423.

This sequence belongs to the peptidase M24B family. Bacterial-type prolidase subfamily. Mn(2+) is required as a cofactor.

It carries out the reaction Xaa-L-Pro dipeptide + H2O = an L-alpha-amino acid + L-proline. Its function is as follows. Splits dipeptides with a prolyl residue in the C-terminal position. This Pectobacterium atrosepticum (strain SCRI 1043 / ATCC BAA-672) (Erwinia carotovora subsp. atroseptica) protein is Xaa-Pro dipeptidase.